A 589-amino-acid polypeptide reads, in one-letter code: Aspartate--tRNA ligase (589 aa).

Glu172 contributes to the L-aspartate binding site. The segment at 196–199 is aspartate; sequence QLFK. Arg218 is an L-aspartate binding site. ATP is bound by residues 218 to 220 and Gln227; that span reads RDE. His449 provides a ligand contact to L-aspartate. Residue Glu483 participates in ATP binding. Arg490 is a binding site for L-aspartate. ATP is bound at residue 535-538; the sequence is GLDR.

It belongs to the class-II aminoacyl-tRNA synthetase family. Type 1 subfamily. As to quaternary structure, homodimer.

It localises to the cytoplasm. It catalyses the reaction tRNA(Asp) + L-aspartate + ATP = L-aspartyl-tRNA(Asp) + AMP + diphosphate. Catalyzes the attachment of L-aspartate to tRNA(Asp) in a two-step reaction: L-aspartate is first activated by ATP to form Asp-AMP and then transferred to the acceptor end of tRNA(Asp). This Actinobacillus succinogenes (strain ATCC 55618 / DSM 22257 / CCUG 43843 / 130Z) protein is Aspartate--tRNA ligase.